The chain runs to 376 residues: uncharacterized protein (376 aa).

Phosphoserine is present on S59. The Rho-GAP domain maps to 139-367 (VAIEITVQRQ…CLIEHHNAIF (229 aa)). The disordered stretch occupies residues 307 to 338 (RPSRSPKKSNDFETATPWDLLSDEGEGPDASS).

This is an uncharacterized protein from Arabidopsis thaliana (Mouse-ear cress).